A 134-amino-acid polypeptide reads, in one-letter code: HHFFTGNGIGLNRFSNPISSPQTQTQTRSLPFPAIKAMKTMEGKVVCASGNKTVAVEVTRLAPHPKYQKRIRLKKKYQAHDPENDFKVGDIVQLLKTRPISKKKTFLAVPAPSRKSKKAGSSGELGIPLQSQQE.

The transit peptide at 1-37 (HHFFTGNGIGLNRFSNPISSPQTQTQTRSLPFPAIKA) directs the protein to the chloroplast. The segment at 106 to 134 (FLAVPAPSRKSKKAGSSGELGIPLQSQQE) is disordered.

Belongs to the universal ribosomal protein uS17 family. As to quaternary structure, part of the 30S ribosomal subunit.

Its subcellular location is the plastid. It localises to the chloroplast. One of the primary rRNA binding proteins, it binds specifically to the 5'-end of 16S ribosomal RNA. This Pisum sativum (Garden pea) protein is Small ribosomal subunit protein uS17c (RPS17).